The primary structure comprises 84 residues: Cell division topological specificity factor (84 aa).

The protein belongs to the MinE family.

In terms of biological role, prevents the cell division inhibition by proteins MinC and MinD at internal division sites while permitting inhibition at polar sites. This ensures cell division at the proper site by restricting the formation of a division septum at the midpoint of the long axis of the cell. This chain is Cell division topological specificity factor, found in Pseudomonas putida (strain W619).